The following is an 83-amino-acid chain: Putative membrane protein insertion efficiency factor (83 aa).

The protein belongs to the UPF0161 family.

It is found in the cell membrane. Its function is as follows. Could be involved in insertion of integral membrane proteins into the membrane. This chain is Putative membrane protein insertion efficiency factor, found in Staphylococcus saprophyticus subsp. saprophyticus (strain ATCC 15305 / DSM 20229 / NCIMB 8711 / NCTC 7292 / S-41).